A 155-amino-acid polypeptide reads, in one-letter code: MKKIVGALAVFVITYALFSAAGYLFPVDQEWYNSLKKPDWTPSGTAIGIIWAILFALISLSAAIVYAAFSFKGAKSFWFTLLINYVLNQAFSYFQFTQKNLLAASLDCLLVAITAIVLLIIAKKYSRAASYLLLPYFLWSAFATFLSFTINSMNL.

The next 5 membrane-spanning stretches (helical) occupy residues 4–24 (IVGA…AGYL), 46–66 (AIGI…AIVY), 77–97 (FWFT…FQFT), 101–121 (LLAA…LLII), and 130–150 (SYLL…SFTI).

The protein belongs to the TspO/BZRP family.

Its subcellular location is the cell membrane. This is an uncharacterized protein from Bacillus subtilis (strain 168).